The sequence spans 199 residues: Heparin-binding hemagglutinin (199 aa).

Residues 162–180 are compositionally biased toward low complexity; that stretch reads KAAPAKKAAPAKKAAPAKK. A disordered region spans residues 162-199; sequence KAAPAKKAAPAKKAAPAKKAAAKKAPAKKAAAKKVTQK. Basic residues predominate over residues 181 to 199; that stretch reads AAAKKAPAKKAAAKKVTQK.

This sequence to M.leprae HbhA. In terms of processing, glycosylated. Glycosylation may protect the protein from proteolytic degradation and be important for hemagglutination. It suggests that the carbohydrate moiety may be located within the C-terminal domain of HbhA.

The protein localises to the cell surface. Functionally, required for extrapulmonary dissemination. Mediates adherence to epithelial cells by binding to sulfated glycoconjugates present at the surface of these cells. The sequence is that of Heparin-binding hemagglutinin (hbhA) from Mycobacterium tuberculosis (strain CDC 1551 / Oshkosh).